The following is a 376-amino-acid chain: WW domain-binding protein 4 (376 aa).

The Matrin-type zinc finger occupies 11 to 42; the sequence is KFCDYCKCWIADNRPSVEFHERGKNHKENVAR. Residues 94–111 show a composition bias toward polar residues; it reads PTVSPVISTVQPTPTSNQ. 2 disordered regions span residues 94–127 and 192–324; these read PTVSPVISTVQPTPTSNQQKEKKKKKKKKEASKG and WEKP…ECLS. Residues 114–123 are compositionally biased toward basic residues; sequence EKKKKKKKKE. 2 consecutive WW domains span residues 123–156 and 164–197; these read EASKGGWVEGVTADGHCYYYDLITGASQWEKPEG and TAAKAVWVEGLSEDGYTYYYNTETGESKWEKPED. The span at 219–272 shows a compositional bias: basic and acidic residues; that stretch reads EDAKSSDSHSDSEGEQKKAGEASTETKKLIIKFKEKNKSTEKRIGPEIQKEKST. A phosphoserine mark is found at S228 and S230. The segment at 357-375 is interaction with SNRNP200; it reads KKRRLENGKSRNLRQRGDD.

As to quaternary structure, component of the spliceosome B complex. Associated with U2 snRNPs. Binds splicing factors SNRPB, SNRPC and SF1. Interacts via the WW domains with the Pro-rich domains of KHDRBS1/SAM68. Interacts via the WW domains with the Pro-rich domains of WBP11. Interacts with SNRNP200.

The protein localises to the nucleus. The protein resides in the nucleus speckle. Functionally, involved in pre-mRNA splicing as a component of the spliceosome. May play a role in cross-intron bridging of U1 and U2 snRNPs in the mammalian A complex. The chain is WW domain-binding protein 4 (Wbp4) from Mus musculus (Mouse).